The sequence spans 554 residues: Chaperonin GroEL (554 aa).

ATP contacts are provided by residues 30 to 33 (TLGP), Lys51, 87 to 91 (DGTTT), Gly415, 479 to 481 (NAA), and Asp495.

Belongs to the chaperonin (HSP60) family. In terms of assembly, forms a cylinder of 14 subunits composed of two heptameric rings stacked back-to-back. Interacts with the co-chaperonin GroES.

The protein resides in the cytoplasm. The catalysed reaction is ATP + H2O + a folded polypeptide = ADP + phosphate + an unfolded polypeptide.. Its function is as follows. Together with its co-chaperonin GroES, plays an essential role in assisting protein folding. The GroEL-GroES system forms a nano-cage that allows encapsulation of the non-native substrate proteins and provides a physical environment optimized to promote and accelerate protein folding. The polypeptide is Chaperonin GroEL (Nitrosococcus oceani (strain ATCC 19707 / BCRC 17464 / JCM 30415 / NCIMB 11848 / C-107)).